A 359-amino-acid chain; its full sequence is Phospho-N-acetylmuramoyl-pentapeptide-transferase (359 aa).

Transmembrane regions (helical) follow at residues 3–23, 53–73, 84–104, 117–137, 156–176, 187–207, 231–251, 255–275, 283–303, and 330–350; these read QILF…PVLI, GGVA…LIGI, GLLV…DDFI, TAKL…ALQF, IATV…LVSA, LDGL…IITF, LALI…WNAA, IFMG…LSIT, VVIG…VAVF, and VIIR…ALFY.

This sequence belongs to the glycosyltransferase 4 family. MraY subfamily. Requires Mg(2+) as cofactor.

It is found in the cell membrane. The enzyme catalyses UDP-N-acetyl-alpha-D-muramoyl-L-alanyl-gamma-D-glutamyl-meso-2,6-diaminopimeloyl-D-alanyl-D-alanine + di-trans,octa-cis-undecaprenyl phosphate = di-trans,octa-cis-undecaprenyl diphospho-N-acetyl-alpha-D-muramoyl-L-alanyl-D-glutamyl-meso-2,6-diaminopimeloyl-D-alanyl-D-alanine + UMP. The protein operates within cell wall biogenesis; peptidoglycan biosynthesis. Its function is as follows. Catalyzes the initial step of the lipid cycle reactions in the biosynthesis of the cell wall peptidoglycan: transfers peptidoglycan precursor phospho-MurNAc-pentapeptide from UDP-MurNAc-pentapeptide onto the lipid carrier undecaprenyl phosphate, yielding undecaprenyl-pyrophosphoryl-MurNAc-pentapeptide, known as lipid I. The protein is Phospho-N-acetylmuramoyl-pentapeptide-transferase of Rhodococcus opacus (strain B4).